The sequence spans 31 residues: Cytochrome b6-f complex subunit 6 (31 aa).

A helical membrane pass occupies residues Val-4 to Val-24.

The protein belongs to the PetL family. In terms of assembly, the 4 large subunits of the cytochrome b6-f complex are cytochrome b6, subunit IV (17 kDa polypeptide, PetD), cytochrome f and the Rieske protein, while the 4 small subunits are PetG, PetL, PetM and PetN. The complex functions as a dimer.

The protein localises to the plastid. It localises to the chloroplast thylakoid membrane. In terms of biological role, component of the cytochrome b6-f complex, which mediates electron transfer between photosystem II (PSII) and photosystem I (PSI), cyclic electron flow around PSI, and state transitions. PetL is important for photoautotrophic growth as well as for electron transfer efficiency and stability of the cytochrome b6-f complex. This is Cytochrome b6-f complex subunit 6 from Mesostigma viride (Green alga).